Reading from the N-terminus, the 117-residue chain is uncharacterized protein (117 aa).

The signal sequence occupies residues 1-23 (MVSEAEFMAALAKFAETSATASA).

This is an uncharacterized protein from Archaeoglobus fulgidus (strain ATCC 49558 / DSM 4304 / JCM 9628 / NBRC 100126 / VC-16).